A 224-amino-acid chain; its full sequence is UPF0758 protein Patl_0046 (224 aa).

An MPN domain is found at 102-224; that stretch reads VFNSAQQTKH…AVSFAERGLI (123 aa). 3 residues coordinate Zn(2+): histidine 173, histidine 175, and aspartate 186. Residues 173-186 carry the JAMM motif motif; it reads HNHPSGVAEPSQAD.

This sequence belongs to the UPF0758 family.

The chain is UPF0758 protein Patl_0046 from Pseudoalteromonas atlantica (strain T6c / ATCC BAA-1087).